The chain runs to 176 residues: DNA repair RAD52-like protein 1, mitochondrial (176 aa).

The transit peptide at 1–37 (MAGLGLRLKAAKWTLRSGSGAVSREWSSEMGKGVRRF) directs the protein to the mitochondrion.

Belongs to the RAD52 family. As to quaternary structure, interacts with WHY2. In terms of tissue distribution, expressed in root vascular tissue, tips of primary and secondary roots, young leaves, hydathodes, stomatal guard cells, cauline leaves, flower buds, stipules, carpels, pistils and anther filaments.

It is found in the mitochondrion. The protein resides in the nucleus. Its function is as follows. Plant-specific single-stranded DNA-binding protein required for efficient heterologous recombination-dependent DNA repair in nuclear and mitochondrial compartments. Forms large nucleo-protein complexes with WHY2 in mitochondria. Binds ssDNA with high affinity, but with little sequence specificity. Involved in double-stranded DNA break repair. Involved in the hydrolytic splicing pathway in mitochondrion. Facilitates the excision of two cis-spliced group II introns, NAD1 intron 2 and NAD2 intron 1. This chain is DNA repair RAD52-like protein 1, mitochondrial, found in Arabidopsis thaliana (Mouse-ear cress).